The chain runs to 115 residues: Peptidyl-tRNA hydrolase (115 aa).

This sequence belongs to the PTH2 family.

The protein resides in the cytoplasm. The enzyme catalyses an N-acyl-L-alpha-aminoacyl-tRNA + H2O = an N-acyl-L-amino acid + a tRNA + H(+). Functionally, the natural substrate for this enzyme may be peptidyl-tRNAs which drop off the ribosome during protein synthesis. The sequence is that of Peptidyl-tRNA hydrolase from Methanocaldococcus jannaschii (strain ATCC 43067 / DSM 2661 / JAL-1 / JCM 10045 / NBRC 100440) (Methanococcus jannaschii).